Here is a 137-residue protein sequence, read N- to C-terminus: MDSVIRFSVSLPSQLLDELDRKVSEQGYASRSEFTRDLIREKIVNDSWKDADEELIGVLTLIYVHHHNDLVNKKMDIEHDSDVKIICTNHVHVDHHNCLETISIRGEASKIERFADRIAGLKGVKFSKLTKAAVPKF.

Positions 79, 90, 92, and 98 each coordinate Ni(2+).

Belongs to the transcriptional regulatory CopG/NikR family. Requires Ni(2+) as cofactor.

Transcriptional regulator. The sequence is that of Putative nickel-responsive regulator from Campylobacter concisus (strain 13826).